We begin with the raw amino-acid sequence, 300 residues long: HTH-type transcriptional regulator ArgP (300 aa).

An HTH lysR-type domain is found at Phe4–Thr60. A DNA-binding region (H-T-H motif) is located at residues Phe21–Lys40.

Belongs to the LysR transcriptional regulatory family. As to quaternary structure, homodimer.

In terms of biological role, controls the transcription of genes involved in arginine and lysine metabolism. In Pseudomonas aeruginosa (strain UCBPP-PA14), this protein is HTH-type transcriptional regulator ArgP.